The following is a 139-amino-acid chain: Holo-[acyl-carrier-protein] synthase (139 aa).

Mg(2+) contacts are provided by D8 and E61.

Belongs to the P-Pant transferase superfamily. AcpS family. Mg(2+) is required as a cofactor.

The protein resides in the cytoplasm. It catalyses the reaction apo-[ACP] + CoA = holo-[ACP] + adenosine 3',5'-bisphosphate + H(+). Functionally, transfers the 4'-phosphopantetheine moiety from coenzyme A to a Ser of acyl-carrier-protein. The chain is Holo-[acyl-carrier-protein] synthase from Nitrobacter winogradskyi (strain ATCC 25391 / DSM 10237 / CIP 104748 / NCIMB 11846 / Nb-255).